The chain runs to 225 residues: MPNRKVVKFFFDVISPYSYFGFEGITRHRSVWKTPIQMKPFFFAGVVRHTENPGLPLRIPIKEKYMHKDLLFSAQYWGIPFRLPKDYTNMMLNTSSIVPQRILVASQLRDNVLMEDVARGLWHRFYAYGKPIFTKSQVAEVLRDLHVKDVDELVMMSDSAEVKNILRENTDEAIGNGCFGAPWMHITDGHGKVLQTVFGSDRLPQVADFLAEPFKGPMREKKPNA.

Glutathione-binding positions include 15-17 (SPY), N52, and 200-201 (SD).

It belongs to the GST superfamily. Kappa family. Expressed in the pharynx, body wall muscles and epidermis. Weaker expression is seen in the intestine.

It is found in the mitochondrion. It carries out the reaction RX + glutathione = an S-substituted glutathione + a halide anion + H(+). Has roles in respiratory and lipid metabolism. The polypeptide is Glutathione s-transferase kappa 2 (gstk-2) (Caenorhabditis elegans).